Here is a 213-residue protein sequence, read N- to C-terminus: Cytidylate kinase (213 aa).

9–17 (GPAASGKGT) serves as a coordination point for ATP.

Belongs to the cytidylate kinase family. Type 1 subfamily.

It is found in the cytoplasm. The enzyme catalyses CMP + ATP = CDP + ADP. It catalyses the reaction dCMP + ATP = dCDP + ADP. This Caulobacter vibrioides (strain ATCC 19089 / CIP 103742 / CB 15) (Caulobacter crescentus) protein is Cytidylate kinase.